Here is a 92-residue protein sequence, read N- to C-terminus: Small ribosomal subunit protein bS18 (92 aa).

It belongs to the bacterial ribosomal protein bS18 family. As to quaternary structure, part of the 30S ribosomal subunit. Forms a tight heterodimer with protein bS6.

Functionally, binds as a heterodimer with protein bS6 to the central domain of the 16S rRNA, where it helps stabilize the platform of the 30S subunit. The chain is Small ribosomal subunit protein bS18 from Chlorobium chlorochromatii (strain CaD3).